The following is a 554-amino-acid chain: uncharacterized protein (554 aa).

4 disordered regions span residues 1–127 (MTTH…NYND), 139–173 (IEDD…SKAG), 293–395 (NNNN…PLSE), and 416–509 (FGFS…RKIR). 3 stretches are compositionally biased toward low complexity: residues 9 to 30 (SSSN…NNNI), 46 to 55 (DPTSSSSPTN), and 63 to 125 (SNSN…LINY). Positions 139-153 (IEDDEEYEEIGDEES) are enriched in acidic residues. Residues 164 to 173 (NDSLNGSKAG) show a composition bias toward polar residues. Low complexity-rich tracts occupy residues 293–387 (NNNN…CSSN), 416–449 (FGFS…SSIS), and 461–484 (SPPL…NNNH). Over residues 485 to 508 (HNNHHQNHHHQNHNHQHHSKKRKI) the composition is skewed to basic residues.

This is an uncharacterized protein from Dictyostelium discoideum (Social amoeba).